The primary structure comprises 411 residues: uncharacterized protein (411 aa).

The 180-residue stretch at 20–199 (FLYFDFDAFF…LPITEIPGIG (180 aa)) folds into the UmuC domain.

The protein belongs to the DNA polymerase type-Y family.

This is an uncharacterized protein from Mycoplasma genitalium (strain ATCC 33530 / DSM 19775 / NCTC 10195 / G37) (Mycoplasmoides genitalium).